The sequence spans 611 residues: Fatty acid photodecarboxylase, chloroplastic (611 aa).

Residues 1 to 22 (MMLGPKTVTRGATKGAAPRSMA) form a disordered region. Residues 1 to 36 (MMLGPKTVTRGATKGAAPRSMAARRVGGARRLSVRA) constitute a chloroplast transit peptide. FAD is bound by residues 55-56 (TA), Glu76, Met125, Ser129, and 133-136 (NATL). Cys392, Arg412, Tyr427, and Gln447 together coordinate hexadecanoate. FAD is bound at residue Gly582.

It belongs to the GMC oxidoreductase family. FAD is required as a cofactor.

It is found in the plastid. The protein resides in the chloroplast. It carries out the reaction a long-chain fatty acid + hnu + H(+) = a long-chain alkane + CO2. It catalyses the reaction hnu + hexadecanoate + H(+) = pentadecane + CO2. Activated by blue light and repressed by red light. Functionally, catalyzes the decarboxylation of free fatty acids to n-alkanes or n-alkenes in response to blue light. Substrate preference is toward fatty acids with C17 or C18 chains. Saturated fatty acids are converted to alkanes, not alkenes. The decarboxylation is initiated through electron abstraction from the fatty acid by the photo-excited FAD. This is Fatty acid photodecarboxylase, chloroplastic from Chlamydomonas reinhardtii (Chlamydomonas smithii).